The sequence spans 328 residues: MRETVKLIEVARELPVSRKNLQMLLLLLLCGAAAYIINLADPALEPLFLALVFGIVAGNLQRDEEKKRVVERYVPFLLPIGITLYGVNINIPYLGEFHPEIVAATLISTSLIFLTVFWLSSRLKLSRQMSILLACGSGICGVSAIAIISPLIKPRKEEFSAAIMIITAVGLTGAILYPSIAHYASISPDEFAVLAGATLHQTGIVKISSQLFGVEEEALAIKGIRIAMIALVVLILSIIYSESRFYVPWYIVSFLGVALFSSTYLPGEVVQALRPLATVMFATTLAAICYTVNVGRVQRVGVKPLFASYAGWAVGVAFVLLLLGSGAL.

Transmembrane regions (helical) follow at residues 21 to 39 (LQMLLLLLLCGAAAYIINL), 43 to 60 (ALEPLFLALVFGIVAGNL), 73 to 95 (YVPFLLPIGITLYGVNINIPYLG), 101 to 123 (IVAATLISTSLIFLTVFWLSSRL), 130 to 152 (SILLACGSGICGVSAIAIISPLI), 162 to 184 (AIMIITAVGLTGAILYPSIAHYA), 191 to 213 (FAVLAGATLHQTGIVKISSQLFG), 223 to 240 (GIRIAMIALVVLILSIIY), 245 to 267 (FYVPWYIVSFLGVALFSSTYLPG), 271 to 293 (QALRPLATVMFATTLAAICYTVN), and 305 to 327 (LFASYAGWAVGVAFVLLLLGSGA).

The protein belongs to the UPF0324 family.

It is found in the cell membrane. This Archaeoglobus fulgidus (strain ATCC 49558 / DSM 4304 / JCM 9628 / NBRC 100126 / VC-16) protein is UPF0324 membrane protein AF_1621.